The sequence spans 501 residues: Oxygen-independent coproporphyrinogen-III oxidase-like protein HemZ (501 aa).

Residues Asp163–Val405 form the Radical SAM core domain. S-adenosyl-L-methionine is bound at residue Tyr174. 2 residues coordinate [4Fe-4S] cluster: Cys180 and Cys184. Tyr186 is a binding site for S-adenosyl-L-methionine. [4Fe-4S] cluster is bound at residue Cys187. S-adenosyl-L-methionine-binding positions include Gly233, Gly234–Thr235, Glu267, Gln295, Arg307, and Asp332.

This sequence belongs to the anaerobic coproporphyrinogen-III oxidase family. HemZ subfamily. It depends on [4Fe-4S] cluster as a cofactor.

It functions in the pathway porphyrin-containing compound metabolism; protoporphyrin-IX biosynthesis. In terms of biological role, involved in the biosynthesis of porphyrin-containing compound. The polypeptide is Oxygen-independent coproporphyrinogen-III oxidase-like protein HemZ (hemZ) (Bacillus subtilis (strain 168)).